We begin with the raw amino-acid sequence, 101 residues long: NADH-quinone oxidoreductase subunit K (101 aa).

3 consecutive transmembrane segments (helical) span residues 4-24 (LGHLLVLGAALFCISLAGIFL), 30-50 (IVLLMSIELMLLAVNVNFIAF), and 62-82 (FVFFILTVAAAEAAIGLAILV).

It belongs to the complex I subunit 4L family. NDH-1 is composed of 14 different subunits. Subunits NuoA, H, J, K, L, M, N constitute the membrane sector of the complex.

The protein localises to the cell inner membrane. It carries out the reaction a quinone + NADH + 5 H(+)(in) = a quinol + NAD(+) + 4 H(+)(out). In terms of biological role, NDH-1 shuttles electrons from NADH, via FMN and iron-sulfur (Fe-S) centers, to quinones in the respiratory chain. The immediate electron acceptor for the enzyme in this species is believed to be ubiquinone. Couples the redox reaction to proton translocation (for every two electrons transferred, four hydrogen ions are translocated across the cytoplasmic membrane), and thus conserves the redox energy in a proton gradient. In Xylella fastidiosa (strain 9a5c), this protein is NADH-quinone oxidoreductase subunit K.